The chain runs to 497 residues: Actin-binding protein WASF2 (497 aa).

Disordered regions lie at residues 173–203 and 239–436; these read KEKRKHRKEKKDNPNRGNVNPRKIKTRKEEW and ENVD…SDAR. Over residues 252-263 the composition is skewed to low complexity; it reads SDSASSPSPSFS. Pro residues-rich tracts occupy residues 298–335 and 343–403; these read SHPPPAPPLSSPPGPKPGFAPPPAPPPPPPMSVPPPLP and GTPP…PPLP. In terms of domain architecture, WH2 spans 435–452; that stretch reads ARSDLLSAIRQGFQLRRV. Ser-473 carries the phosphoserine modification.

It belongs to the SCAR/WAVE family. As to quaternary structure, binds actin and the Arp2/3 complex. Interacts with BAIAP2. Component of the WAVE2 complex composed of ABI1, CYFIP1/SRA1, NCKAP1/NAP1 (NCKAP1l/HEM1 in hematopoietic cells) and WASF2/WAVE2. Directly interacts with BRK1. Interacts with human cytomegalovirus protein UL135. Interacts with FNBP1L (via the SH3 domain).

The protein localises to the cytoplasm. It is found in the cytoskeleton. Its subcellular location is the cell projection. The protein resides in the lamellipodium. It localises to the basolateral cell membrane. Downstream effector molecule involved in the transmission of signals from tyrosine kinase receptors and small GTPases to the actin cytoskeleton. Promotes formation of actin filaments. Part of the WAVE complex that regulates lamellipodia formation. The WAVE complex regulates actin filament reorganization via its interaction with the Arp2/3 complex. The sequence is that of Actin-binding protein WASF2 from Mus musculus (Mouse).